Reading from the N-terminus, the 60-residue chain is MAVPKRKMSRANTRHRRSQWKASAPTLVQCSNRACREPKLPHVACPSCGQYDGRQIHEPA.

Positions 1–19 are enriched in basic residues; the sequence is MAVPKRKMSRANTRHRRSQ. The segment at 1–20 is disordered; the sequence is MAVPKRKMSRANTRHRRSQW.

This sequence belongs to the bacterial ribosomal protein bL32 family.

The chain is Large ribosomal subunit protein bL32B from Saccharopolyspora erythraea (strain ATCC 11635 / DSM 40517 / JCM 4748 / NBRC 13426 / NCIMB 8594 / NRRL 2338).